A 300-amino-acid chain; its full sequence is Cation-efflux pump FieF (300 aa).

4 helical membrane passes run 12-32 (AAIA…FAWW), 39-59 (ILAA…NLLV), 82-102 (AALA…LTGI), and 114-134 (PGVG…LVSF). Zn(2+) is bound by residues Asp-45 and Asp-49. Zn(2+)-binding residues include His-153 and Asp-157. 2 consecutive transmembrane segments (helical) span residues 156–176 (SDVM…YGWH) and 178–198 (ADAL…LRMG).

The protein belongs to the cation diffusion facilitator (CDF) transporter (TC 2.A.4) family. FieF subfamily. As to quaternary structure, homodimer.

The protein resides in the cell inner membrane. The catalysed reaction is Zn(2+)(in) + H(+)(out) = Zn(2+)(out) + H(+)(in). The enzyme catalyses Cd(2+)(in) + H(+)(out) = Cd(2+)(out) + H(+)(in). It catalyses the reaction Fe(2+)(in) + H(+)(out) = Fe(2+)(out) + H(+)(in). Its function is as follows. Divalent metal cation transporter which exports Zn(2+), Cd(2+) and possibly Fe(2+). May be involved in zinc and iron detoxification by efflux. The polypeptide is Cation-efflux pump FieF (Shigella flexneri serotype 5b (strain 8401)).